Consider the following 155-residue polypeptide: MSDKSESYKVITDNRQARYLYEILETFEAGIQLTGTEVKSIRAGKVNLQDGYALLRDGEIWLINAHISPYNASGQYFNHEPRRTRKLLLHRQEIRKLIGKVEQQGLTLVPLKMYLKRGWVKVSIALGKGKKLHDKRESLKRRQDQRDIQRAMKNY.

The segment at 135-155 (KRESLKRRQDQRDIQRAMKNY) is disordered.

Belongs to the SmpB family.

The protein resides in the cytoplasm. Required for rescue of stalled ribosomes mediated by trans-translation. Binds to transfer-messenger RNA (tmRNA), required for stable association of tmRNA with ribosomes. tmRNA and SmpB together mimic tRNA shape, replacing the anticodon stem-loop with SmpB. tmRNA is encoded by the ssrA gene; the 2 termini fold to resemble tRNA(Ala) and it encodes a 'tag peptide', a short internal open reading frame. During trans-translation Ala-aminoacylated tmRNA acts like a tRNA, entering the A-site of stalled ribosomes, displacing the stalled mRNA. The ribosome then switches to translate the ORF on the tmRNA; the nascent peptide is terminated with the 'tag peptide' encoded by the tmRNA and targeted for degradation. The ribosome is freed to recommence translation, which seems to be the essential function of trans-translation. In Trichormus variabilis (strain ATCC 29413 / PCC 7937) (Anabaena variabilis), this protein is SsrA-binding protein.